The chain runs to 363 residues: Aminomethyltransferase (363 aa).

This sequence belongs to the GcvT family. The glycine cleavage system is composed of four proteins: P, T, L and H.

It catalyses the reaction N(6)-[(R)-S(8)-aminomethyldihydrolipoyl]-L-lysyl-[protein] + (6S)-5,6,7,8-tetrahydrofolate = N(6)-[(R)-dihydrolipoyl]-L-lysyl-[protein] + (6R)-5,10-methylene-5,6,7,8-tetrahydrofolate + NH4(+). Its function is as follows. The glycine cleavage system catalyzes the degradation of glycine. This is Aminomethyltransferase from Thermosipho melanesiensis (strain DSM 12029 / CIP 104789 / BI429).